The chain runs to 105 residues: MKNKIKIRLKSFDHRSLDQATKEIVSAVKRTFAKINGPIPLPKKIGRFTVNRSPHVHKKSREQFEIRKHKRLLVIGDPNPAVVDALSKVDLAAGVDVVIELESGE.

Belongs to the universal ribosomal protein uS10 family. Part of the 30S ribosomal subunit.

In terms of biological role, involved in the binding of tRNA to the ribosomes. This Rickettsia rickettsii (strain Iowa) protein is Small ribosomal subunit protein uS10.